The primary structure comprises 374 residues: MLRLGGAGLVRGLRVVSPAWLRGPGGLPLALARTTGTSGARDRRAPASGTQRGRALSLSAAAVVNSAPRPLQPYLRLMRLDKPIGTWLLYLPCTWSIGLAADPGCFPDWYMLSLFGTGAILMRGAGCTINDMWDRDFDKKVERTANRPIAAGDISAFQSFVFLGAQLTLALGVLLHLNYYSIAMGAASLLLVVTYPLMKRVTFWPQLALGLTFNWGALLGWSAVKGSCDPAVCLPLYFSGVMWTLIYDTIYAHQDKKDDALIGLKSTALLFRENTKQWLSGFGVAMVGALSLVGASSGQTLPYYAAVAAVGAHLAHQIYTVDIHRAEDCWEKFTSNRTVGLLLFLGIVLGNLYKDKPDETKGVDAVGEESERTS.

A mitochondrion-targeting transit peptide spans 1–63 (MLRLGGAGLV…RALSLSAAAV (63 aa)). Topologically, residues 64–83 (VNSAPRPLQPYLRLMRLDKP) are mitochondrial matrix. The chain crosses the membrane as a helical span at residues 84–104 (IGTWLLYLPCTWSIGLAADPG). Residues 105-108 (CFPD) lie on the Mitochondrial intermembrane side of the membrane. A helical transmembrane segment spans residues 109–129 (WYMLSLFGTGAILMRGAGCTI). Over 130-153 (NDMWDRDFDKKVERTANRPIAAGD) the chain is Mitochondrial matrix. The chain crosses the membrane as a helical span at residues 154 to 174 (ISAFQSFVFLGAQLTLALGVL). At 175–176 (LH) the chain is on the mitochondrial intermembrane side. Residues 177 to 197 (LNYYSIAMGAASLLLVVTYPL) form a helical membrane-spanning segment. At 198–200 (MKR) the chain is on the mitochondrial matrix side. The chain crosses the membrane as a helical span at residues 201–221 (VTFWPQLALGLTFNWGALLGW). Residues 222 to 230 (SAVKGSCDP) lie on the Mitochondrial intermembrane side of the membrane. Residues 231–251 (AVCLPLYFSGVMWTLIYDTIY) form a helical membrane-spanning segment. At 252-277 (AHQDKKDDALIGLKSTALLFRENTKQ) the chain is on the mitochondrial matrix side. Residues 278-298 (WLSGFGVAMVGALSLVGASSG) traverse the membrane as a helical segment. Topologically, residues 299–300 (QT) are mitochondrial intermembrane. A helical membrane pass occupies residues 301-321 (LPYYAAVAAVGAHLAHQIYTV). The Mitochondrial matrix segment spans residues 322 to 332 (DIHRAEDCWEK). Residues 333–353 (FTSNRTVGLLLFLGIVLGNLY) traverse the membrane as a helical segment. The Mitochondrial intermembrane portion of the chain corresponds to 354–374 (KDKPDETKGVDAVGEESERTS).

This sequence belongs to the UbiA prenyltransferase family. Mg(2+) is required as a cofactor.

The protein localises to the mitochondrion inner membrane. It carries out the reaction an all-trans-polyprenyl diphosphate + 4-hydroxybenzoate = a 4-hydroxy-3-(all-trans-polyprenyl)benzoate + diphosphate. It catalyses the reaction all-trans-decaprenyl diphosphate + 4-hydroxybenzoate = 4-hydroxy-3-(all-trans-decaprenyl)benzoate + diphosphate. The enzyme catalyses all-trans-nonaprenyl diphosphate + 4-hydroxybenzoate = 4-hydroxy-3-(all-trans-nonaprenyl)benzoate + diphosphate. The protein operates within cofactor biosynthesis; ubiquinone biosynthesis. In terms of biological role, mediates the second step in the final reaction sequence of coenzyme Q (CoQ) biosynthesis. Catalyzes the prenylation of para-hydroxybenzoate (PHB) with an all-trans polyprenyl group (such as all-trans-nonaprenyl diphosphate). The length of the polyprenyl side chain varies depending on the species, in humans, the side chain is comprised of 10 isoprenyls producing CoQ10 (also known as ubiquinone), whereas rodents predominantly generate CoQ9. However, this specificity is not complete, human tissues have low amounts of CoQ9 and rodent organs contain some CoQ10. Plays a central role in the biosynthesis of CoQ9. CoQ9 is a vital molecule that transports electrons from mitochondrial respiratory chain complexes. CoQs also function as cofactors for uncoupling protein and plays a role as regulator of the extracellularly-induced ceramide-dependent apoptotic pathway. Regulates mitochondrial permeability transition pore (mPTP) opening and ROS production (pivotal events in cell death) in a tissue specific manner. In Rattus norvegicus (Rat), this protein is 4-hydroxybenzoate polyprenyltransferase, mitochondrial.